The chain runs to 330 residues: Aspartate--ammonia ligase (330 aa).

Belongs to the class-II aminoacyl-tRNA synthetase family. AsnA subfamily.

The protein resides in the cytoplasm. The catalysed reaction is L-aspartate + NH4(+) + ATP = L-asparagine + AMP + diphosphate + H(+). The protein operates within amino-acid biosynthesis; L-asparagine biosynthesis; L-asparagine from L-aspartate (ammonia route): step 1/1. This Aeromonas salmonicida (strain A449) protein is Aspartate--ammonia ligase.